The primary structure comprises 515 residues: Adenine DNA glycosylase (515 aa).

A compositionally biased stretch (basic residues) spans 1 to 24 (MKKLQASVRSHKKQPANHKRRRTR). Residues 1 to 38 (MKKLQASVRSHKKQPANHKRRRTRALSSSQAKPSSLDG) are disordered. E105 (proton donor/acceptor) is an active-site residue. C261, C268, C271, and C277 together coordinate [4Fe-4S] cluster. The region spanning 335–466 (PREEYSATCV…AMKKVFRMYE (132 aa)) is the Nudix hydrolase domain. Positions 376-398 (VTLEPSEQHQHKALLQELQRWCG) match the Nudix box motif. The segment at 468–494 (HRQGTRKGSKRSQVCPPSSRKKPSLGQ) is disordered.

This sequence belongs to the Nth/MutY family. Requires [4Fe-4S] cluster as cofactor. In terms of tissue distribution, expressed in heart, lung, liver, intestine, brain and thymus.

It localises to the nucleus. The protein localises to the mitochondrion. It catalyses the reaction Hydrolyzes free adenine bases from 7,8-dihydro-8-oxoguanine:adenine mismatched double-stranded DNA, leaving an apurinic site.. Involved in oxidative DNA damage repair. Initiates repair of A*oxoG to C*G by removing the inappropriately paired adenine base from the DNA backbone. Possesses both adenine and 2-OH-A DNA glycosylase activities. This Mus musculus (Mouse) protein is Adenine DNA glycosylase (Mutyh).